A 201-amino-acid chain; its full sequence is Sorting nexin-10 (201 aa).

The required for interaction with ATP6V1D stretch occupies residues 8–125 (EEFVSVWVRD…SLHLFLQSHL (118 aa)). In terms of domain architecture, PX spans 10–127 (FVSVWVRDPR…HLFLQSHLNS (118 aa)). 3 residues coordinate a 1,2-diacyl-sn-glycero-3-phospho-(1D-myo-inositol-3-phosphate): Arg53, Lys79, and Arg94. The disordered stretch occupies residues 155–201 (RFPEEEEEGKKDADVEYDSESSSSGLGHSSDDSSSHGCKTSPALQES).

It belongs to the sorting nexin family. Interacts with ATP6V1D; may play a role in ciliogenesis. In terms of tissue distribution, expressed in femur, calvariae and teeth.

The protein localises to the cytoplasm. The protein resides in the endosome membrane. Its subcellular location is the cytoskeleton. It is found in the microtubule organizing center. It localises to the centrosome. Probable phosphoinositide-binding protein involved in protein sorting and membrane trafficking in endosomes. Plays a role in cilium biogenesis through regulation of the transport and the localization of proteins to the cilium. Required for the localization to the cilium of V-ATPase subunit ATP6V1D and ATP6V0D1, and RAB8A. Involved in osteoclast differentiation and therefore bone resorption. The protein is Sorting nexin-10 (Snx10) of Mus musculus (Mouse).